The primary structure comprises 350 residues: Transmembrane protein 185B (350 aa).

The next 7 membrane-spanning stretches (helical) occupy residues 16–36, 41–61, 81–101, 111–131, 168–188, 211–231, and 240–260; these read LIYA…DGII, WAVF…ASVG, FKAM…EILV, FWLL…AACV, WLVV…VVLY, VTMA…EVLL, and TFSY…LMAT.

This sequence belongs to the TMEM185 family.

The protein resides in the membrane. The sequence is that of Transmembrane protein 185B (Tmem185b) from Mus musculus (Mouse).